A 650-amino-acid polypeptide reads, in one-letter code: p-hydroxybenzoic acid efflux pump subunit AaeB (650 aa).

Helical transmembrane passes span 7 to 27, 32 to 52, 61 to 81, 87 to 107, 115 to 135, 148 to 168, 365 to 385, 402 to 422, 426 to 446, 450 to 470, and 478 to 498; these read FPIK…HLNL, WAVM…GGDP, GILR…IMIA, VVML…SSLI, LGLA…SGGL, EIIL…PRSI, LFWL…LGVI, FVYG…YILP, QSAV…GILI, QIGT…DNPM, and IDNA…ILLI.

Belongs to the aromatic acid exporter ArAE (TC 2.A.85) family.

It localises to the cell inner membrane. Forms an efflux pump with AaeA. Could function as a metabolic relief valve, allowing to eliminate certain compounds when they accumulate to high levels in the cell. The sequence is that of p-hydroxybenzoic acid efflux pump subunit AaeB from Pantoea ananatis (strain LMG 20103).